Consider the following 131-residue polypeptide: Profilin-8 (131 aa).

Cys-13 and Cys-115 form a disulfide bridge. The short motif at 81–97 (AVIRGKKGAGGITIKKT) is the Involved in PIP2 interaction element. Thr-111 carries the post-translational modification Phosphothreonine.

Belongs to the profilin family. In terms of assembly, occurs in many kinds of cells as a complex with monomeric actin in a 1:1 ratio. Phosphorylated by MAP kinases.

Its subcellular location is the cytoplasm. The protein resides in the cytoskeleton. Functionally, binds to actin and affects the structure of the cytoskeleton. At high concentrations, profilin prevents the polymerization of actin, whereas it enhances it at low concentrations. In Phleum pratense (Common timothy), this protein is Profilin-8.